Here is a 304-residue protein sequence, read N- to C-terminus: Killer cell immunoglobulin-like receptor 2DS5 (304 aa).

Positions 1 to 21 (MSLMVISMACVAFFLLQGAWP) are cleaved as a signal peptide. The Extracellular segment spans residues 22 to 245 (HEGFRRKPSL…SETGNPRHLH (224 aa)). Ig-like C2-type domains follow at residues 42 to 107 (EETV…VTHS) and 142 to 205 (GESV…FRDS). 2 disulfides stabilise this stretch: Cys49-Cys100 and Cys149-Cys198. Residues Asn67, Asn84, Asn178, and Asn223 are each glycosylated (N-linked (GlcNAc...) asparagine). A helical membrane pass occupies residues 246-264 (VLIGTSVVKLPFTILLFFL). The Cytoplasmic segment spans residues 265–304 (LHRWCSNKKNASVMDQGPAGNRTVNREDSDEQDHQEVSYA). A disordered region spans residues 275 to 304 (ASVMDQGPAGNRTVNREDSDEQDHQEVSYA). Over residues 288-304 (VNREDSDEQDHQEVSYA) the composition is skewed to basic and acidic residues.

The protein belongs to the immunoglobulin superfamily. Interacts with TYROBP. In terms of processing, N-glycosylated, glycosylation varies depending on the allele which alters cell surface expression levels. As to expression, expressed on a discrete subset of peripheral blood NK cells.

Its subcellular location is the cell membrane. Activating natural killer (NK) receptor that recognizes C2 epitopes of HLA-C alleles. Bridging the innate and adaptive immune systems, NK cells express a number of cell surface receptors which either inhibit or stimulate their cytotoxicity. Able to activate NK cells citotoxicity and cytokine production such as IFNG. Receptor functions are attenuated even lost in some alleles, such as KIR2DS5*002 represented in this entry. The chain is Killer cell immunoglobulin-like receptor 2DS5 from Homo sapiens (Human).